Here is a 330-residue protein sequence, read N- to C-terminus: Ketol-acid reductoisomerase (NADP(+)) (330 aa).

The KARI N-terminal Rossmann domain occupies 2 to 182 (ARMYYDADAN…GGTRAGILET (181 aa)). Residues 25-28 (YGSQ), Ser51, Ser53, and 83-86 (DEFQ) contribute to the NADP(+) site. The active site involves His108. Position 134 (Gly134) interacts with NADP(+). The region spanning 183–328 (SFREETETDL…KDLRAMFSWL (146 aa)) is the KARI C-terminal knotted domain. Residues Asp191, Glu195, Glu227, and Glu231 each coordinate Mg(2+). Ser252 serves as a coordination point for substrate.

Belongs to the ketol-acid reductoisomerase family. Mg(2+) serves as cofactor.

It carries out the reaction (2R)-2,3-dihydroxy-3-methylbutanoate + NADP(+) = (2S)-2-acetolactate + NADPH + H(+). The enzyme catalyses (2R,3R)-2,3-dihydroxy-3-methylpentanoate + NADP(+) = (S)-2-ethyl-2-hydroxy-3-oxobutanoate + NADPH + H(+). It participates in amino-acid biosynthesis; L-isoleucine biosynthesis; L-isoleucine from 2-oxobutanoate: step 2/4. It functions in the pathway amino-acid biosynthesis; L-valine biosynthesis; L-valine from pyruvate: step 2/4. Functionally, involved in the biosynthesis of branched-chain amino acids (BCAA). Catalyzes an alkyl-migration followed by a ketol-acid reduction of (S)-2-acetolactate (S2AL) to yield (R)-2,3-dihydroxy-isovalerate. In the isomerase reaction, S2AL is rearranged via a Mg-dependent methyl migration to produce 3-hydroxy-3-methyl-2-ketobutyrate (HMKB). In the reductase reaction, this 2-ketoacid undergoes a metal-dependent reduction by NADPH to yield (R)-2,3-dihydroxy-isovalerate. This chain is Ketol-acid reductoisomerase (NADP(+)), found in Synechococcus sp. (strain ATCC 27144 / PCC 6301 / SAUG 1402/1) (Anacystis nidulans).